A 159-amino-acid polypeptide reads, in one-letter code: Putative 4-hydroxy-4-methyl-2-oxoglutarate aldolase (159 aa).

Substrate is bound by residues 78–81 (GDVI) and arginine 100. An a divalent metal cation-binding site is contributed by aspartate 101.

The protein belongs to the class II aldolase/RraA-like family. Homotrimer. The cofactor is a divalent metal cation.

The enzyme catalyses 4-hydroxy-4-methyl-2-oxoglutarate = 2 pyruvate. It carries out the reaction oxaloacetate + H(+) = pyruvate + CO2. Functionally, catalyzes the aldol cleavage of 4-hydroxy-4-methyl-2-oxoglutarate (HMG) into 2 molecules of pyruvate. Also contains a secondary oxaloacetate (OAA) decarboxylase activity due to the common pyruvate enolate transition state formed following C-C bond cleavage in the retro-aldol and decarboxylation reactions. The chain is Putative 4-hydroxy-4-methyl-2-oxoglutarate aldolase from Mycobacterium sp. (strain KMS).